We begin with the raw amino-acid sequence, 362 residues long: MTAAAELRPRRVRPVRIWLTLVAMLIAVMVLVGGATRLTESGLSIVEWKPVTGTLPPLNDAQWRDAFEGYKTIPQYRELNAGMTLGEFKTIFWWEWGHRLLGRVIGIAYLLPLLWFLWRGAIAPEWKRALWAIFALGALQGAVGWWMVASGLSQRTEVSQVRLAIHLTLALVIYAAIVWTLRRLAGRPPIVAAARLKFTAIALLALTLVQLFLGALVAGLRAGRMFNTWPLIDGALIPEASRLWFEQPWWKNLFDNHLTVQFDHRMMAYALWALAAWHAIDALRARAGGAAGGALWLFAALSLQAVLGILTLLYQVPIGLALAHQAVGIVVLTLAVLQVERLTASKSKEAPRVMPAPASQRG.

Transmembrane regions (helical) follow at residues 15–35 (VRIWLTLVAMLIAVMVLVGGA), 104–124 (VIGIAYLLPLLWFLWRGAIAP), 129–149 (ALWAIFALGALQGAVGWWMVA), 161–181 (VRLAIHLTLALVIYAAIVWTL), and 200–220 (AIALLALTLVQLFLGALVAGL). Heme is bound at residue His-264. 3 helical membrane-spanning segments follow: residues 266 to 285 (MMAYALWALAAWHAIDALRA), 293 to 313 (GALWLFAALSLQAVLGILTLL), and 316 to 336 (VPIGLALAHQAVGIVVLTLAV). Residue His-324 participates in heme binding.

Belongs to the COX15/CtaA family. Type 2 subfamily. In terms of assembly, interacts with CtaB. Heme b serves as cofactor.

Its subcellular location is the cell membrane. It carries out the reaction Fe(II)-heme o + 2 A + H2O = Fe(II)-heme a + 2 AH2. It functions in the pathway porphyrin-containing compound metabolism; heme A biosynthesis; heme A from heme O: step 1/1. Its function is as follows. Catalyzes the conversion of heme O to heme A by two successive hydroxylations of the methyl group at C8. The first hydroxylation forms heme I, the second hydroxylation results in an unstable dihydroxymethyl group, which spontaneously dehydrates, resulting in the formyl group of heme A. This chain is Heme A synthase, found in Rhodopseudomonas palustris (strain BisB5).